The primary structure comprises 194 residues: Cilia- and flagella-associated protein 107 (194 aa).

Mn stretches follow at residues 45 to 60 (TPQS…FPDH) and 95 to 107 (ISTY…RHGY).

Microtubule inner protein component of sperm flagellar doublet microtubules. Expressed in airway epithelial cells.

The protein localises to the cytoplasm. The protein resides in the cytoskeleton. It localises to the cilium axoneme. Its subcellular location is the flagellum axoneme. Microtubule inner protein (MIP) part of the dynein-decorated doublet microtubules (DMTs) in cilia axoneme, which is required for motile cilia beating. The chain is Cilia- and flagella-associated protein 107 from Homo sapiens (Human).